We begin with the raw amino-acid sequence, 656 residues long: tRNA 5-methylaminomethyl-2-thiouridine biosynthesis bifunctional protein MnmC (656 aa).

Residues M1–A236 are tRNA (mnm(5)s(2)U34)-methyltransferase. Residues I260–S656 are FAD-dependent cmnm(5)s(2)U34 oxidoreductase.

In the N-terminal section; belongs to the methyltransferase superfamily. tRNA (mnm(5)s(2)U34)-methyltransferase family. The protein in the C-terminal section; belongs to the DAO family. FAD serves as cofactor.

The protein localises to the cytoplasm. It catalyses the reaction 5-aminomethyl-2-thiouridine(34) in tRNA + S-adenosyl-L-methionine = 5-methylaminomethyl-2-thiouridine(34) in tRNA + S-adenosyl-L-homocysteine + H(+). Catalyzes the last two steps in the biosynthesis of 5-methylaminomethyl-2-thiouridine (mnm(5)s(2)U) at the wobble position (U34) in tRNA. Catalyzes the FAD-dependent demodification of cmnm(5)s(2)U34 to nm(5)s(2)U34, followed by the transfer of a methyl group from S-adenosyl-L-methionine to nm(5)s(2)U34, to form mnm(5)s(2)U34. The polypeptide is tRNA 5-methylaminomethyl-2-thiouridine biosynthesis bifunctional protein MnmC (Paraburkholderia xenovorans (strain LB400)).